The chain runs to 37 residues: M-oxotoxin-Ot2d (37 aa).

As to expression, expressed by the venom gland.

It localises to the secreted. Disrupts biological membranes, particularly those rich in phosphocholine. Has antimicrobial activity against Gram-negative bacterium E.coli, Gram-positive bacteria B.subtilis and S.aureus, and hemolytic activity against sheep, pig and guinea pig red blood cells. Has insecticidal activity against S.frugiperda ovarian cells by opening non-selective ion channels. Enhances the insecticidal activity of spider venom neurotoxic peptides. This Oxyopes takobius (Lynx spider) protein is M-oxotoxin-Ot2d.